A 343-amino-acid chain; its full sequence is Holliday junction branch migration complex subunit RuvB (343 aa).

The large ATPase domain (RuvB-L) stretch occupies residues 4–184; sequence SDRLISAKAG…FGIVQRLEFY (181 aa). ATP contacts are provided by residues Ile23, Arg24, Gly65, Lys68, Thr69, Thr70, 131–133, Arg174, Tyr184, and Arg221; that span reads EDY. A Mg(2+)-binding site is contributed by Thr69. Positions 185–255 are small ATPAse domain (RuvB-S); sequence NHQDLTHIIT…IADQALNMLK (71 aa). The segment at 258–343 is head domain (RuvB-H); sequence SQGFDHMDRR…RSGREDDLFE (86 aa). DNA-binding residues include Arg294, Arg313, and Arg318.

It belongs to the RuvB family. In terms of assembly, homohexamer. Forms an RuvA(8)-RuvB(12)-Holliday junction (HJ) complex. HJ DNA is sandwiched between 2 RuvA tetramers; dsDNA enters through RuvA and exits via RuvB. An RuvB hexamer assembles on each DNA strand where it exits the tetramer. Each RuvB hexamer is contacted by two RuvA subunits (via domain III) on 2 adjacent RuvB subunits; this complex drives branch migration. In the full resolvosome a probable DNA-RuvA(4)-RuvB(12)-RuvC(2) complex forms which resolves the HJ.

The protein localises to the cytoplasm. It catalyses the reaction ATP + H2O = ADP + phosphate + H(+). Functionally, the RuvA-RuvB-RuvC complex processes Holliday junction (HJ) DNA during genetic recombination and DNA repair, while the RuvA-RuvB complex plays an important role in the rescue of blocked DNA replication forks via replication fork reversal (RFR). RuvA specifically binds to HJ cruciform DNA, conferring on it an open structure. The RuvB hexamer acts as an ATP-dependent pump, pulling dsDNA into and through the RuvAB complex. RuvB forms 2 homohexamers on either side of HJ DNA bound by 1 or 2 RuvA tetramers; 4 subunits per hexamer contact DNA at a time. Coordinated motions by a converter formed by DNA-disengaged RuvB subunits stimulates ATP hydrolysis and nucleotide exchange. Immobilization of the converter enables RuvB to convert the ATP-contained energy into a lever motion, pulling 2 nucleotides of DNA out of the RuvA tetramer per ATP hydrolyzed, thus driving DNA branch migration. The RuvB motors rotate together with the DNA substrate, which together with the progressing nucleotide cycle form the mechanistic basis for DNA recombination by continuous HJ branch migration. Branch migration allows RuvC to scan DNA until it finds its consensus sequence, where it cleaves and resolves cruciform DNA. The sequence is that of Holliday junction branch migration complex subunit RuvB from Marinobacter nauticus (strain ATCC 700491 / DSM 11845 / VT8) (Marinobacter aquaeolei).